Consider the following 350-residue polypeptide: DNA repair protein RAD51 homolog 2 (350 aa).

Positions 1–75 (MSSKKLRRVG…TAYELKTRRS (75 aa)) are interaction with RAD51C. An ATP-binding site is contributed by 108-115 (GPPGCGKT).

Belongs to the RecA family. RAD51 subfamily. In terms of assembly, part of the BCDX2 complex consisting of RAD51B, RAD51C, RAD51D and XRCC2; the complex has a ring-like structure arranged into a flat disc around a central channel. The BCDX2 subcomplex RAD51B:RAD51C interacts with RAD51. Interacts with SWSAP1; involved in homologous recombination repair. Interacts with HELQ. Phosphorylated on tyrosine residues by BCR-ABL. In terms of tissue distribution, expressed in a wide range of tissues.

The protein localises to the nucleus. In terms of biological role, involved in the homologous recombination repair (HRR) pathway of double-stranded DNA breaks arising during DNA replication or induced by DNA-damaging agents. May promote the assembly of presynaptic RAD51 nucleoprotein filaments. Binds single-stranded DNA and double-stranded DNA and has DNA-dependent ATPase activity. Part of the RAD51 paralog protein complex BCDX2 which acts in the BRCA1-BRCA2-dependent HR pathway. Upon DNA damage, BCDX2 acts downstream of BRCA2 recruitment and upstream of RAD51 recruitment. BCDX2 binds predominantly to the intersection of the four duplex arms of the Holliday junction and to junction of replication forks. The BCDX2 complex was originally reported to bind single-stranded DNA, single-stranded gaps in duplex DNA and specifically to nicks in duplex DNA. The BCDX2 subcomplex RAD51B:RAD51C exhibits single-stranded DNA-dependent ATPase activity suggesting an involvement in early stages of the HR pathway. This Mus musculus (Mouse) protein is DNA repair protein RAD51 homolog 2 (Rad51b).